A 333-amino-acid chain; its full sequence is Glycerol-3-phosphate dehydrogenase [NAD(P)+] (333 aa).

NADPH is bound by residues Trp-13, Lys-33, and Lys-108. Lys-108 and Gly-138 together coordinate sn-glycerol 3-phosphate. Ser-142 is an NADPH binding site. 5 residues coordinate sn-glycerol 3-phosphate: Lys-193, Asp-246, Ser-256, Arg-257, and Asn-258. Catalysis depends on Lys-193, which acts as the Proton acceptor. NADPH is bound at residue Arg-257. The NADPH site is built by Val-281 and Glu-283.

Belongs to the NAD-dependent glycerol-3-phosphate dehydrogenase family.

Its subcellular location is the cytoplasm. The catalysed reaction is sn-glycerol 3-phosphate + NAD(+) = dihydroxyacetone phosphate + NADH + H(+). It catalyses the reaction sn-glycerol 3-phosphate + NADP(+) = dihydroxyacetone phosphate + NADPH + H(+). It participates in membrane lipid metabolism; glycerophospholipid metabolism. Catalyzes the reduction of the glycolytic intermediate dihydroxyacetone phosphate (DHAP) to sn-glycerol 3-phosphate (G3P), the key precursor for phospholipid synthesis. The chain is Glycerol-3-phosphate dehydrogenase [NAD(P)+] from Bifidobacterium longum (strain NCC 2705).